Consider the following 501-residue polypeptide: Pyruvate dehydrogenase protein X component, mitochondrial (501 aa).

The transit peptide at 1 to 53 (MAASWRLHCNQPLLRYLLGFSSRRSLGLAQGAAAWPVDRGASWRWFHSTQLLQ) directs the protein to the mitochondrion. In terms of domain architecture, Lipoyl-binding spans 56–132 (PIKVLMPSLS…QLGSLIALMV (77 aa)). Lys97 bears the N6-lipoyllysine mark. Positions 145–176 (KDVSAPPPVSKPPAPTQPSPQPQIPCPARKEH) are disordered. Over residues 149 to 169 (APPPVSKPPAPTQPSPQPQIP) the composition is skewed to pro residues. The 38-residue stretch at 183–220 (RLSPAARNILEKHSLDASQGTATGPRGIFTKEDALKLV) folds into the Peripheral subunit-binding (PSBD) domain. Lys194 is modified (N6-acetyllysine). Ser196 is modified (phosphoserine). Residues 228–256 (ITESRPASAPPPSLSASVPPQATAGPSYP) are disordered. Lys394 is modified (N6-succinyllysine).

It belongs to the 2-oxoacid dehydrogenase family. As to quaternary structure, part of the inner core of the multimeric pyruvate dehydrogenase complex that is composed of about 48 DLAT and 12 PDHX molecules. This core binds multiple copies of pyruvate dehydrogenase (subunits PDH1A and PDHB, E1), dihydrolipoamide acetyltransferase (DLAT, E2) and lipoamide dehydrogenase (DLD, E3). Interacts with SIRT4. Interacts with DLD. Post-translationally, delipoylated at Lys-97 by SIRT4, delipoylation decreases the PHD complex activity.

The protein localises to the mitochondrion matrix. Required for anchoring dihydrolipoamide dehydrogenase (E3) to the dihydrolipoamide transacetylase (E2) core of the pyruvate dehydrogenase complexes of eukaryotes. This specific binding is essential for a functional PDH complex. This is Pyruvate dehydrogenase protein X component, mitochondrial (Pdhx) from Mus musculus (Mouse).